The primary structure comprises 465 residues: UDP-N-acetylmuramate--L-alanine ligase (465 aa).

114–120 (GAHGKTT) contributes to the ATP binding site.

It belongs to the MurCDEF family.

The protein resides in the cytoplasm. The catalysed reaction is UDP-N-acetyl-alpha-D-muramate + L-alanine + ATP = UDP-N-acetyl-alpha-D-muramoyl-L-alanine + ADP + phosphate + H(+). The protein operates within cell wall biogenesis; peptidoglycan biosynthesis. Functionally, cell wall formation. In Syntrophomonas wolfei subsp. wolfei (strain DSM 2245B / Goettingen), this protein is UDP-N-acetylmuramate--L-alanine ligase.